A 104-amino-acid polypeptide reads, in one-letter code: Large ribosomal subunit protein bL21 (104 aa).

This sequence belongs to the bacterial ribosomal protein bL21 family. Part of the 50S ribosomal subunit. Contacts protein L20.

This protein binds to 23S rRNA in the presence of protein L20. This chain is Large ribosomal subunit protein bL21, found in Streptococcus gordonii (strain Challis / ATCC 35105 / BCRC 15272 / CH1 / DL1 / V288).